Here is a 270-residue protein sequence, read N- to C-terminus: MRIALGVQYDGAAFCGWQAQPHGKTVQDALERALGEFACVPLHTTVAGRTDTGVHGLGQVVHFDTDLDRTDFSWVRGTNAFLPSTVSVQWAKPMPETFHARFAAFERTYYYVLYVHPVRSPMLAGRAGWIHTPLDDDAMRAAAAHLIGEHDFSSFRSSECQSKTPVKHLYQIDVRRSGHFIHFRFRANAFLHHMVRNLMGCLVAVGRGRYPADWLADVLAGRDRTLAAPTFMADGLYLAHVGYPAEFAVPPAQLGSVPWSSVWADLDLPS.

The active-site Nucleophile is the aspartate 51. Residue tyrosine 109 coordinates substrate.

Belongs to the tRNA pseudouridine synthase TruA family. As to quaternary structure, homodimer.

It carries out the reaction uridine(38/39/40) in tRNA = pseudouridine(38/39/40) in tRNA. Functionally, formation of pseudouridine at positions 38, 39 and 40 in the anticodon stem and loop of transfer RNAs. This Burkholderia ambifaria (strain ATCC BAA-244 / DSM 16087 / CCUG 44356 / LMG 19182 / AMMD) (Burkholderia cepacia (strain AMMD)) protein is tRNA pseudouridine synthase A.